Reading from the N-terminus, the 1173-residue chain is Protein GIGANTEA (1173 aa).

Disordered stretches follow at residues 150–187, 604–641, and 840–863; these read EQQN…RKPL, SGSK…NVKG, and SRTE…SGRP. Composition is skewed to polar residues over residues 162–172 and 613–633; these read SKATTSGSPTS and YAST…QTAN. A compositionally biased stretch (basic and acidic residues) spans 854-863; sequence RHSDEGSGRP.

This sequence belongs to the GIGANTEA family. In terms of assembly, interacts with SPY. Interacts with ADO1 (via N-terminus) and ADO2. Interacts with ADO3 (via N-terminus). Interacts (via N-terminus) with CDF1. Interacts (via N-terminus) with TCP4. As to expression, widely expressed with highest levels in inflorescence apices, young flowers and young siliques.

The protein localises to the nucleus. It is found in the cytoplasm. Functionally, involved in regulation of circadian rhythm and photoperiodic flowering. May play a role in maintenance of circadian amplitude and period length. Is involved in phytochrome B signaling. Stabilizes ADO3 and the circadian photoreceptor ADO1/ZTL. Regulates 'CONSTANS' (CO) in the long-day flowering pathway by modulating the ADO3-dependent protein stability of CDF1 and CDF2, but is not essential to activate CO transcription. Regulates, via the microRNA miR172, a CO-independent pathway that promotes photoperiodic flowering by inducing 'FLOWERING LOCUS T'. In Arabidopsis thaliana (Mouse-ear cress), this protein is Protein GIGANTEA (GI).